A 216-amino-acid chain; its full sequence is Superoxide dismutase [Cu-Zn], chloroplastic (216 aa).

A chloroplast-targeting transit peptide spans 1–62 (MACHSALAAV…ASPRSMVVVA (62 aa)). The Cu cation site is built by His-108, His-110, and His-125. A disulfide bridge links Cys-119 with Cys-208. Positions 125, 133, 142, and 145 each coordinate Zn(2+). Residue His-182 coordinates Cu cation.

Belongs to the Cu-Zn superoxide dismutase family. As to quaternary structure, homotetramer. The cofactor is Cu cation. It depends on Zn(2+) as a cofactor.

The protein localises to the plastid. It is found in the chloroplast. The enzyme catalyses 2 superoxide + 2 H(+) = H2O2 + O2. Functionally, destroys radicals which are normally produced within the cells and which are toxic to biological systems. The protein is Superoxide dismutase [Cu-Zn], chloroplastic (SODCP) of Zantedeschia aethiopica (White calla lily).